A 1921-amino-acid polypeptide reads, in one-letter code: Disks large homolog 5 (1921 aa).

Residues 1 to 90 form the CARD domain; sequence MEPQRRELLA…HLLPILYLNG (90 aa). The tract at residues 116–143 is disordered; the sequence is ESSSSLSSVGTTGKAPSPPPLLTEQQAN. Positions 139 to 601 form a coiled coil; the sequence is EQQANDTVEN…KEARFRQLMA (463 aa). Phosphoserine occurs at positions 264 and 295. 2 consecutive PDZ domains span residues 620–710 and 705–796; these read VVEF…RRRK and VVRR…LKVF. The segment at 857 to 898 is disordered; that stretch reads ELGHSGGSSSFLHKPFSGSSSPVSPQACPSTSERSLNSFRSD. Over residues 873–898 the composition is skewed to polar residues; sequence SGSSSPVSPQACPSTSERSLNSFRSD. S900 is modified (phosphoserine). Residues 930–1121 form a disordered region; that stretch reads EVPLDKIDPE…RPKSAPSFRP (192 aa). T984 is subject to Phosphothreonine. S1000 carries the post-translational modification Phosphoserine. T1011 is modified (phosphothreonine). Basic and acidic residues predominate over residues 1017 to 1030; that stretch reads RRSDSIKFQHRLET. S1021 carries the post-translational modification Phosphoserine. Pro residues predominate over residues 1045 to 1055; sequence TSPPSAPPPSM. T1183 carries the phosphothreonine modification. Disordered stretches follow at residues 1204-1227, 1243-1266, and 1280-1343; these read VLPCGSPPVPRDAGSQSLSPSVQH, YSEMRASQGSNSLPSSARLGSSSN, and PRYP…KDRP. S1209 bears the Phosphoserine mark. Positions 1217–1227 are enriched in polar residues; the sequence is GSQSLSPSVQH. Positions 1252 to 1266 are enriched in low complexity; sequence SNSLPSSARLGSSSN. The residue at position 1263 (S1263) is a Phosphoserine. Residues 1292-1324 show a composition bias toward polar residues; sequence GSLSHSECSTPPRSPLNIDTLSSCSQPQTTAST. The residue at position 1334 (S1334) is a Phosphoserine. The 80-residue stretch at 1350-1429 folds into the PDZ 3 domain; the sequence is HVKVQKGSEP…TITILAQYNP (80 aa). Composition is skewed to polar residues over residues 1434–1443, 1450–1460, and 1483–1495; these read LNSHSRSSSH, PHSTLQGSSAG, and AKQSASSTRSVGD. A disordered region spans residues 1434-1501; it reads LNSHSRSSSH…SVGDTTKKTP (68 aa). The region spanning 1504–1585 is the PDZ 4 domain; it reads RIVFIKKSQL…SLRLKVQYRH (82 aa). The SH3 domain maps to 1596 to 1664; sequence GDSFYIRALY…PSKYVMDQEF (69 aa). S1669 carries the post-translational modification Phosphoserine. The 184-residue stretch at 1724-1907 folds into the Guanylate kinase-like domain; the sequence is DSVSLAYQRV…ICTQILAMVS (184 aa).

It belongs to the MAGUK family. Interacts with MPP1. Interacts with CTNNB1 and with the third SH3 domain of SORBS3 to form a ternary complex. Interacts (via coiled-coil domain) with MARK3. Interacts (via PDZ domain 3) with STK3/MST2 and STK4/MST1. Interacts with SCRIB. Interacts with CTNB1. Interacts with SMO and (via PDZ4 or guanylate kinase-like domain) with KIF7. As to expression, brain (at protein level).

It is found in the cell junction. The protein localises to the cell membrane. Its subcellular location is the postsynaptic density. The protein resides in the cytoplasm. It localises to the cytoskeleton. It is found in the cilium basal body. Acts as a regulator of the Hippo signaling pathway. Negatively regulates the Hippo signaling pathway by mediating the interaction of MARK3 with STK3/4, bringing them together to promote MARK3-dependent hyperphosphorylation and inactivation of STK3 kinase activity toward LATS1. Positively regulates the Hippo signaling by mediating the interaction of SCRIB with STK4/MST1 and LATS1 which is important for the activation of the Hippo signaling pathway. Involved in regulating cell proliferation, maintenance of epithelial polarity, epithelial-mesenchymal transition (EMT), cell migration and invasion. Plays an important role in dendritic spine formation and synaptogenesis in cortical neurons; regulates synaptogenesis by enhancing the cell surface localization of N-cadherin. Acts as a positive regulator of hedgehog (Hh) signaling pathway. Plays a critical role in the early point of the SMO activity cycle by interacting with SMO at the ciliary base to induce the accumulation of KIF7 and GLI2 at the ciliary tip for GLI2 activation. The chain is Disks large homolog 5 (Dlg5) from Mus musculus (Mouse).